The sequence spans 378 residues: Glutamate 5-kinase (378 aa).

Lysine 20 contributes to the ATP binding site. Residues serine 60, aspartate 147, and asparagine 159 each contribute to the substrate site. Residues 179 to 180 (TD) and 221 to 227 (TGGMATK) contribute to the ATP site. One can recognise a PUA domain in the interval 286–364 (AGDIVIDAGA…QEIYKVLGYE (79 aa)).

Belongs to the glutamate 5-kinase family.

The protein localises to the cytoplasm. It carries out the reaction L-glutamate + ATP = L-glutamyl 5-phosphate + ADP. The protein operates within amino-acid biosynthesis; L-proline biosynthesis; L-glutamate 5-semialdehyde from L-glutamate: step 1/2. In terms of biological role, catalyzes the transfer of a phosphate group to glutamate to form L-glutamate 5-phosphate. This Photobacterium profundum (strain SS9) protein is Glutamate 5-kinase.